The chain runs to 361 residues: Hydroxycarboxylate dehydrogenase B (361 aa).

NAD(+) contacts are provided by residues H48, 122–124 (GRI), 178–182 (LLDYA), H234, N270, and 313–316 (GEWE).

Belongs to the LDH2/MDH2 oxidoreductase family.

It carries out the reaction 2-hydroxyglutarate + NADP(+) = 2-oxoglutarate + NADPH + H(+). The catalysed reaction is 2-hydroxyglutarate + NAD(+) = 2-oxoglutarate + NADH + H(+). The enzyme catalyses 3-phenyllactate + NADP(+) = 3-phenylpyruvate + NADPH + H(+). It catalyses the reaction 3-phenyllactate + NAD(+) = 3-phenylpyruvate + NADH + H(+). It carries out the reaction (2R)-2-hydroxy-3-(4-hydroxyphenyl)propanoate + NAD(+) = 3-(4-hydroxyphenyl)pyruvate + NADH + H(+). The catalysed reaction is (2R)-2-hydroxy-3-(4-hydroxyphenyl)propanoate + NADP(+) = 3-(4-hydroxyphenyl)pyruvate + NADPH + H(+). The enzyme catalyses (2R)-3-(3,4-dihydroxyphenyl)lactate + NADP(+) = 3-(3,4-dihydroxyphenyl)pyruvate + NADPH + H(+). It catalyses the reaction (2R)-3-(3,4-dihydroxyphenyl)lactate + NAD(+) = 3-(3,4-dihydroxyphenyl)pyruvate + NADH + H(+). Catalyzes the NAD(P)H-dependent reduction of 2-oxoglutarate, phenylpyruvate and (4-hydroxyphenyl)pyruvate, leading to the respective 2-hydroxycarboxylate in vitro. Shows a preference for NADPH over NADH as a redox partner. Do not catalyze the reverse reactions. The protein is Hydroxycarboxylate dehydrogenase B of Escherichia coli (strain K12).